A 434-amino-acid chain; its full sequence is MSKITKIIAREIIDSRGNPTVESEVHLEGGFVGLASSPSGASTGSLEALELRDENKDRFMGKGVEKAVSLINEKISIALKNKNARNQSDIDHIMIDLDGTINKSKLGANAILSVSLAVAKAAAASKRMPLYAHIAEINETPGVFSMPLPMINIINGGKHANNNIDIQEFMIQPISAKTVKESIRIGCEIFHALGELLKEKGMSTTVGDEGGYAPNLKSNEEALNIIQDAIQKTKYKLGQDIRLAIDCAASELYNKNEKKYNLKGENISFSSKEFTHYLEKLSQKYPIVSIEDGQDESDWEGFLYQTHVLGHKIQLVGDDLFVTNKNILKKGIKKGIANSILIKLNQIGTLTETLEAIKTAKQANYGVIISHRSGETEDASIADLSVGTSSGQIKTGSMSRSDRTSKYNQLIRIEENLGTKYAPFHGLREIKSAF.

Q167 provides a ligand contact to (2R)-2-phosphoglycerate. Catalysis depends on E209, which acts as the Proton donor. Mg(2+) contacts are provided by D246, E291, and D318. (2R)-2-phosphoglycerate contacts are provided by K343, R372, S373, and K394. Residue K343 is the Proton acceptor of the active site.

Belongs to the enolase family. Component of the RNA degradosome, a multiprotein complex involved in RNA processing and mRNA degradation. Mg(2+) serves as cofactor.

It is found in the cytoplasm. It localises to the secreted. The protein resides in the cell surface. The enzyme catalyses (2R)-2-phosphoglycerate = phosphoenolpyruvate + H2O. It participates in carbohydrate degradation; glycolysis; pyruvate from D-glyceraldehyde 3-phosphate: step 4/5. In terms of biological role, catalyzes the reversible conversion of 2-phosphoglycerate (2-PG) into phosphoenolpyruvate (PEP). It is essential for the degradation of carbohydrates via glycolysis. This Buchnera aphidicola subsp. Acyrthosiphon pisum (strain 5A) protein is Enolase.